Reading from the N-terminus, the 273-residue chain is Sulfur carrier protein FdhD (273 aa).

Residue Cys124 is the Cysteine persulfide intermediate of the active site. 263–268 (FCRQSR) contacts Mo-bis(molybdopterin guanine dinucleotide).

The protein belongs to the FdhD family.

The protein localises to the cytoplasm. Functionally, required for formate dehydrogenase (FDH) activity. Acts as a sulfur carrier protein that transfers sulfur from IscS to the molybdenum cofactor prior to its insertion into FDH. The polypeptide is Sulfur carrier protein FdhD (Acinetobacter baylyi (strain ATCC 33305 / BD413 / ADP1)).